A 205-amino-acid chain; its full sequence is High frequency lysogenization protein HflD homolog (205 aa).

Belongs to the HflD family.

It is found in the cytoplasm. The protein localises to the cell inner membrane. The polypeptide is High frequency lysogenization protein HflD homolog (Shewanella piezotolerans (strain WP3 / JCM 13877)).